The chain runs to 401 residues: Argininosuccinate synthase (401 aa).

ATP is bound at residue 9 to 17; sequence AYSGGLDTS. Tyr-86 contacts L-citrulline. Residue Gly-116 coordinates ATP. Positions 118, 122, and 123 each coordinate L-aspartate. Asn-122 contributes to the L-citrulline binding site. Arg-126, Ser-174, Ser-183, Glu-259, and Tyr-271 together coordinate L-citrulline.

This sequence belongs to the argininosuccinate synthase family. Type 1 subfamily. In terms of assembly, homotetramer.

The protein resides in the cytoplasm. The catalysed reaction is L-citrulline + L-aspartate + ATP = 2-(N(omega)-L-arginino)succinate + AMP + diphosphate + H(+). It participates in amino-acid biosynthesis; L-arginine biosynthesis; L-arginine from L-ornithine and carbamoyl phosphate: step 2/3. The polypeptide is Argininosuccinate synthase (Bacillus mycoides (strain KBAB4) (Bacillus weihenstephanensis)).